The chain runs to 159 residues: Ribosomal RNA large subunit methyltransferase H (159 aa).

Residues L76, G108, and 127–132 (FGLLTL) contribute to the S-adenosyl-L-methionine site.

The protein belongs to the RNA methyltransferase RlmH family. In terms of assembly, homodimer.

It localises to the cytoplasm. The enzyme catalyses pseudouridine(1915) in 23S rRNA + S-adenosyl-L-methionine = N(3)-methylpseudouridine(1915) in 23S rRNA + S-adenosyl-L-homocysteine + H(+). In terms of biological role, specifically methylates the pseudouridine at position 1915 (m3Psi1915) in 23S rRNA. The chain is Ribosomal RNA large subunit methyltransferase H from Leuconostoc citreum (strain KM20).